Here is a 119-residue protein sequence, read N- to C-terminus: Ribonuclease P protein component (119 aa).

Belongs to the RnpA family. Consists of a catalytic RNA component (M1 or rnpB) and a protein subunit.

It carries out the reaction Endonucleolytic cleavage of RNA, removing 5'-extranucleotides from tRNA precursor.. In terms of biological role, RNaseP catalyzes the removal of the 5'-leader sequence from pre-tRNA to produce the mature 5'-terminus. It can also cleave other RNA substrates such as 4.5S RNA. The protein component plays an auxiliary but essential role in vivo by binding to the 5'-leader sequence and broadening the substrate specificity of the ribozyme. The protein is Ribonuclease P protein component of Klebsiella pneumoniae (strain 342).